Here is a 124-residue protein sequence, read N- to C-terminus: Small ribosomal subunit protein bS6 (124 aa).

It belongs to the bacterial ribosomal protein bS6 family.

Its function is as follows. Binds together with bS18 to 16S ribosomal RNA. This is Small ribosomal subunit protein bS6 from Bordetella avium (strain 197N).